The chain runs to 379 residues: L-lactate dehydrogenase (379 aa).

The 379-residue stretch at 1–379 (MIISASTDYR…IGRDSLVSLP (379 aa)) folds into the FMN hydroxy acid dehydrogenase domain. Tyr24 contributes to the substrate binding site. The FMN site is built by Ser106 and Gln127. Tyr129 is a substrate binding site. Thr155 is a binding site for FMN. Arg164 is a binding site for substrate. Lys251 is a binding site for FMN. The active-site Proton acceptor is His275. Arg278 provides a ligand contact to substrate. Residue 306–330 (DSGIRTGLDVVRMLALGADTVLLGR) coordinates FMN.

It belongs to the FMN-dependent alpha-hydroxy acid dehydrogenase family. It depends on FMN as a cofactor.

It localises to the cell inner membrane. It carries out the reaction (S)-lactate + A = pyruvate + AH2. In terms of biological role, catalyzes the conversion of L-lactate to pyruvate. Is coupled to the respiratory chain. The polypeptide is L-lactate dehydrogenase (Stenotrophomonas maltophilia (strain K279a)).